We begin with the raw amino-acid sequence, 358 residues long: Carbamoyl phosphate synthase small chain (358 aa).

Positions 1-172 are CPSase; sequence MKAALALEDG…EAKRFESDGD (172 aa). Residues S45, G222, and G224 each contribute to the L-glutamine site. One can recognise a Glutamine amidotransferase type-1 domain in the interval 174–358; it reads EVVLVDCGVK…RYVDMLREYR (185 aa). Residue C249 is the Nucleophile of the active site. 4 residues coordinate L-glutamine: L250, Q253, N291, and F294. Active-site residues include H333 and E335.

The protein belongs to the CarA family. In terms of assembly, composed of two chains; the small (or glutamine) chain promotes the hydrolysis of glutamine to ammonia, which is used by the large (or ammonia) chain to synthesize carbamoyl phosphate. Tetramer of heterodimers (alpha,beta)4.

The enzyme catalyses hydrogencarbonate + L-glutamine + 2 ATP + H2O = carbamoyl phosphate + L-glutamate + 2 ADP + phosphate + 2 H(+). It catalyses the reaction L-glutamine + H2O = L-glutamate + NH4(+). Its pathway is amino-acid biosynthesis; L-arginine biosynthesis; carbamoyl phosphate from bicarbonate: step 1/1. It participates in pyrimidine metabolism; UMP biosynthesis via de novo pathway; (S)-dihydroorotate from bicarbonate: step 1/3. Functionally, small subunit of the glutamine-dependent carbamoyl phosphate synthetase (CPSase). CPSase catalyzes the formation of carbamoyl phosphate from the ammonia moiety of glutamine, carbonate, and phosphate donated by ATP, constituting the first step of 2 biosynthetic pathways, one leading to arginine and/or urea and the other to pyrimidine nucleotides. The small subunit (glutamine amidotransferase) binds and cleaves glutamine to supply the large subunit with the substrate ammonia. The protein is Carbamoyl phosphate synthase small chain of Archaeoglobus fulgidus (strain ATCC 49558 / DSM 4304 / JCM 9628 / NBRC 100126 / VC-16).